We begin with the raw amino-acid sequence, 947 residues long: Protein translocase subunit SecA 1 (947 aa).

ATP contacts are provided by residues Q83, 101-105, and D490; that span reads GEGKT. The segment at 860–947 is disordered; that stretch reads AKAQEQTGQG…KTSKPTRRRG (88 aa). Residues 925–934 are compositionally biased toward basic and acidic residues; it reads TRRERREAAR. Residues 935-947 show a composition bias toward basic residues; the sequence is KQAKTSKPTRRRG.

Belongs to the SecA family. In terms of assembly, monomer and homodimer. Part of the essential Sec protein translocation apparatus which comprises SecA, SecYEG and auxiliary proteins SecDF. Other proteins may also be involved.

The protein localises to the cell membrane. It is found in the cytoplasm. The enzyme catalyses ATP + H2O + cellular proteinSide 1 = ADP + phosphate + cellular proteinSide 2.. Its function is as follows. Part of the Sec protein translocase complex. Interacts with the SecYEG preprotein conducting channel. Has a central role in coupling the hydrolysis of ATP to the transfer of proteins into and across the cell membrane, serving as an ATP-driven molecular motor driving the stepwise translocation of polypeptide chains across the membrane. This Mycobacterium sp. (strain JLS) protein is Protein translocase subunit SecA 1.